A 44-amino-acid polypeptide reads, in one-letter code: Iota-conotoxin-like R11.11 (44 aa).

4 cysteine pairs are disulfide-bonded: cysteine 5–cysteine 19, cysteine 12–cysteine 22, cysteine 18–cysteine 27, and cysteine 21–cysteine 36. Arginine 44 is a propeptide (removed by a carboxypeptidase).

It belongs to the conotoxin I1 superfamily. As to expression, expressed by the venom duct.

It is found in the secreted. Its function is as follows. Iota-conotoxins bind to voltage-gated sodium channels (Nav) and act as agonists by shifting the voltage-dependence of activation to more hyperpolarized levels. Produces general excitatory symptoms. In Conus radiatus (Rayed cone), this protein is Iota-conotoxin-like R11.11.